The sequence spans 3019 residues: Genome polyprotein (3019 aa).

The residue at position 2 (serine 2) is an N-acetylserine; by host. Positions 2 to 23 (STLPKPQRKTKRNTNRRPMDVK) are interaction with STAT1. Residues 2-58 (STLPKPQRKTKRNTNRRPMDVKFPGGGQIVGGVYLLPRRGPRLGVRATRKTSERSQP) form an interaction with EIF2AK2/PKR region. Positions 2–59 (STLPKPQRKTKRNTNRRPMDVKFPGGGQIVGGVYLLPRRGPRLGVRATRKTSERSQPR) are interaction with DDX3X. The interval 2–75 (STLPKPQRKT…PKARQPQGRH (74 aa)) is disordered. Residues 2-168 (STLPKPQRKT…EDGINYATGN (167 aa)) lie on the Cytoplasmic side of the membrane. 2 consecutive short sequence motifs (nuclear localization signal) follow at residues 5–13 (PKPQRKTKR) and 38–43 (PRRGPR). A compositionally biased stretch (basic residues) spans 7–16 (PQRKTKRNTN). Low complexity predominate over residues 32–47 (GGVYLLPRRGPRLGVR). Position 53 is a phosphoserine; by host (serine 53). Short sequence motifs (nuclear localization signal) lie at residues 58–64 (PRGRRQP) and 66–71 (PKARQP). Phosphoserine; by host is present on serine 99. Residues 112 to 152 (PRRRSRNLGKVIDTLTCGFADLMGYIPVVGAPLGGVAAALA) form an important for endoplasmic reticulum and mitochondrial localization region. Phosphoserine; by host PKA is present on serine 116. Residues 122 to 173 (VIDTLTCGFADLMGYIPVVGAPLGGVAAALAHGVRAIEDGINYATGNLPGCS) form an interaction with APOA2 region. The important for lipid droplets localization stretch occupies residues 164–167 (YATG). Residues 169–189 (LPGCSFSIFLLALLSCLTTPA) form a helical membrane-spanning segment. The propeptide at 178–191 (LLALLSCLTTPASA) is ER anchor for the core protein, removed in mature form by host signal peptidase. At 190–358 (SALTYGNSSG…FGGHWGILLA (169 aa)) the chain is on the lumenal side. Asparagine 196, asparagine 209, asparagine 234, and asparagine 250 each carry an N-linked (GlcNAc...) asparagine; by host glycan. Residues 265 to 296 (LAGAAVVCSSLYIGDLCGSLFLAGQLFTFQPR) form an important for fusion region. Asparagine 305 carries an N-linked (GlcNAc...) asparagine; by host glycan. Residues 359–379 (VAYFGMAGNWLKVLAVLFLFA) traverse the membrane as a helical segment. The Lumenal portion of the chain corresponds to 380-730 (GVEATTTVGH…WEYIVLMFLV (351 aa)). Positions 385-411 (TTVGHGVARTTAGITGLFSPGASQNLQ) are HVR1. Residue asparagine 415 is glycosylated (N-linked (GlcNAc...) asparagine; by host). Asparagine 422 and asparagine 429 each carry an N-linked (GlcNAc...) (high mannose) asparagine; by host glycan. Cystine bridges form between cysteine 428-cysteine 553, cysteine 451-cysteine 458, cysteine 487-cysteine 495, and cysteine 504-cysteine 509. Residue asparagine 447 is glycosylated (N-linked (GlcNAc...) asparagine; by host). Positions 474-479 (KVNISG) are HVR2. Residue asparagine 476 is glycosylated (N-linked (GlcNAc...) asparagine; by host). A CD81-binding 1 region spans residues 481–494 (SDDRPYCWHYAPRP). Asparagine 533 carries an N-linked (GlcNAc...) asparagine; by host glycan. Residues 545–552 (PPTGGWFG) form a CD81-binding 2 region. A glycan (N-linked (GlcNAc...) asparagine; by host) is linked at asparagine 557. Cysteines 565 and 570 form a disulfide. Residue asparagine 578 is glycosylated (N-linked (GlcNAc...) asparagine; by host). 3 cysteine pairs are disulfide-bonded: cysteine 586–cysteine 590, cysteine 602–cysteine 625, and cysteine 612–cysteine 649. Residues asparagine 628 and asparagine 650 are each glycosylated (N-linked (GlcNAc...) (high mannose) asparagine; by host). Cysteine 657 and cysteine 682 are disulfide-bonded. The tract at residues 665–676 (IEMSPLLFSTTQ) is PKR/eIF2-alpha phosphorylation homology domain (PePHD). Residues 731–751 (LADARICTCLWLMLLISNVEA) traverse the membrane as a helical segment. The Lumenal portion of the chain corresponds to 752–762 (AVERLVVLNAA). A helical membrane pass occupies residues 763–783 (SAAGTAGWWWAVLFLCCVWYV). Residues 784 to 786 (KGR) are Cytoplasmic-facing. Residues 787 to 808 (LVPACTYMALGMWPLLLTILAL) traverse the membrane as a helical segment. Residues 809–818 (PHRAYAMDNE) lie on the Lumenal side of the membrane. Residues 819–839 (QAASLGAVGLLAITIFTITPT) traverse the membrane as a helical segment. The Cytoplasmic segment spans residues 840–843 (YKKL). The helical transmembrane segment at 844–863 (LTCFIWWNQYFLARAEAMVH) threads the bilayer. Topologically, residues 864-886 (EWVPDLRVRGGRDSIILLTCLLH) are lumenal. The helical transmembrane segment at 887–907 (PQLGFEVTKILLAILAPLYIL) threads the bilayer. In terms of domain architecture, Peptidase C18 spans 908 to 1031 (QYSLLKVPYF…DMQRGGWKLL (124 aa)). The Cytoplasmic segment spans residues 908–1662 (QYSLLKVPYF…CMSADLEVIT (755 aa)). The segment at 909 to 1211 (YSLLKVPYFV…PVENMETTMR (303 aa)) is protease NS2-3. The S-palmitoyl cysteine; by host moiety is linked to residue cysteine 927. Positions 934–954 (AGGRYVQACLLRLGAWTGTFI) are interaction with host SCPS1. Active-site for protease NS2 activity; shared with dimeric partner residues include histidine 957, glutamate 977, and cysteine 998. Residues 1032–1213 (APITAYAQQT…ENMETTMRSP (182 aa)) enclose the Peptidase S29 domain. Residues histidine 1088 and aspartate 1112 each act as charge relay system; for serine protease NS3 activity in the active site. Cysteine 1128 and cysteine 1130 together coordinate Zn(2+). The active-site Charge relay system; for serine protease NS3 activity is the serine 1170. Cysteine 1176 and histidine 1180 together coordinate Zn(2+). Positions 1222 to 1374 (PAVPQTYQVG…PNITETALPT (153 aa)) constitute a Helicase ATP-binding domain. An ATP-binding site is contributed by 1235 to 1242 (APTGSGKS). Mg(2+) is bound by residues serine 1242 and glutamate 1322. The short motif at 1321–1324 (DECH) is the DECH box element. The RNA-binding stretch occupies residues 1491-1503 (QRRGRTGRGKPGV). The helical transmembrane segment at 1663 to 1683 (STWVLVGGVLAALAAYCLSVG) threads the bilayer. Residues 1684–1695 (CVVICGRITLTG) form an NS3-binding region. Over 1684–1810 (CVVICGRITL…SLTSPLRTSQ (127 aa)) the chain is Cytoplasmic. The helical transmembrane segment at 1811–1829 (TLLLNILGGWIAAQVAPPP) threads the bilayer. The Lumenal portion of the chain corresponds to 1830–1833 (ASTA). The chain crosses the membrane as a helical span at residues 1834 to 1854 (FVVSGLAGAAVGSIRLGRVLV). Residue aspartate 1855 is a topological domain, cytoplasmic. A helical membrane pass occupies residues 1856-1876 (VLAGYGAGVSGALVAFKIMSG). At 1877-1886 (DCPTTEDMVN) the chain is on the lumenal side. The helical transmembrane segment at 1887–1907 (LLPALLSPGALVVGVVCAAIL) threads the bilayer. Over 1908–1977 (RRHVGPAEGA…WVNEDTATPC (70 aa)) the chain is Cytoplasmic. A lipid anchor (S-palmitoyl cysteine; by host) is attached at cysteine 1977. An intramembrane segment occupies 1978–2007 (ATSWLRDVWDWVCTVLSDFKVWLQAKLFPR). Topologically, residues 2008-2998 (LPGIPFLSCQ…YHSVSQARPR (991 aa)) are cytoplasmic. Zn(2+)-binding residues include cysteine 2016, cysteine 2034, cysteine 2036, and cysteine 2057. The tract at residues 2125–2213 (EFFTEVDGVR…ASSSASQLSA (89 aa)) is FKBP8-binding. Residues 2125 to 2338 (EFFTEVDGVR…PIPPPRRKRL (214 aa)) are transcriptional activation. An interaction with non-structural protein 4A region spans residues 2140–2144 (PPCKP). Residues 2189 to 2223 (ETASRRLKRGSPPSLASSSASQLSAPSLKATCTTS) form a disordered region. The interval 2194 to 2446 (RLKRGSPPSL…ALITPCAAEE (253 aa)) is interaction with host SKP2. Position 2199 is a phosphoserine; by host; in p56 (serine 2199). A compositionally biased stretch (low complexity) spans 2199-2216 (SPPSLASSSASQLSAPSL). Residues serine 2202, serine 2206, serine 2209, serine 2212, and serine 2215 each carry the phosphoserine; by host; in p58 modification. The segment at 2215-2254 (SLKATCTTSKDHPDMELIEANLLWRQEMGGNITRVESENK) is ISDR. The interval 2215 to 2280 (SLKATCTTSK…REISVSAECH (66 aa)) is interaction with EIF2AK2/PKR. An NS4B-binding region spans residues 2254 to 2312 (KVVVLDSFEPLTAEYDEREISVSAECHRPPRHKFPPALPIWARPDYNPPLLQAWQMPGY). The tract at residues 2305 to 2383 (QAWQMPGYEP…SITSPDPPAP (79 aa)) is V3. The SH3-binding signature appears at 2328–2331 (APIP). The Nuclear localization signal signature appears at 2333-2341 (PRRKRLVHL). Lysine 2356 is covalently cross-linked (Glycyl lysine isopeptide (Lys-Gly) (interchain with G-Cter in ubiquitin)). The segment at 2359 to 2418 (VEGSSDPGPSSDSGLSITSPDPPAPTTPDDACSEAESYSSMPPLEGEPGDPDLSSGSWST) is disordered. The span at 2361–2372 (GSSDPGPSSDSG) shows a compositional bias: low complexity. Phosphoserine; by host occurs at positions 2457 and 2470. Positions 2642-2760 (PMGFSYDTRC…ICESAGVQED (119 aa)) constitute a RdRp catalytic domain. Mg(2+) is bound by residues aspartate 2648, aspartate 2746, and aspartate 2747. The helical transmembrane segment at 2999-3019 (LLLLGLLLLTVGVGIFLVPAR) threads the bilayer.

This sequence belongs to the hepacivirus polyprotein family. In terms of assembly, homooligomer. Interacts with E1 (via C-terminus). Interacts with the non-structural protein 5A. Interacts (via N-terminus) with host STAT1 (via SH2 domain); this interaction results in decreased STAT1 phosphorylation and ubiquitin-mediated proteasome-dependent STAT1 degradation, leading to decreased IFN-stimulated gene transcription. Interacts with host STAT3; this interaction constitutively activates STAT3. Interacts with host LTBR receptor. Interacts with host TNFRSF1A receptor and possibly induces apoptosis. Interacts with host HNRPK. Interacts with host YWHAE. Interacts with host UBE3A/E6AP. Interacts with host DDX3X. Interacts with host APOA2. Interacts with host RXRA protein. Interacts with host SP110 isoform 3/Sp110b; this interaction sequesters the transcriptional corepressor SP110 away from the nucleus. Interacts with host CREB3 nuclear transcription protein; this interaction triggers cell transformation. Interacts with host ACY3. Interacts with host C1QR1. Interacts with host RBM24; this interaction, which enhances the interaction of the mature core protein with 5'-UTR, may inhibit viral translation and favor replication. Interacts with host EIF2AK2/PKR; this interaction induces the autophosphorylation of EIF2AK2. Part of the viral assembly initiation complex composed of NS2, E1, E2, NS3, NS4A, NS5A and the mature core protein. As to quaternary structure, forms a heterodimer with envelope glycoprotein E2. Interacts with mature core protein. Interacts with protease NS2. The heterodimer E1/E2 interacts with host CLDN1; this interaction plays a role in viral entry into host cell. Interacts with host SPSB2 (via C-terminus). Part of the viral assembly initiation complex composed of NS2, E1, E2, NS3, NS4A, NS5A and the mature core protein. Interacts with host NEURL3; this interaction prevents E1 binding to glycoprotein E2. Forms a heterodimer with envelope glycoprotein E1. Interacts with host CD81 and SCARB1 receptors; these interactions play a role in viral entry into host cell. Interacts with host EIF2AK2/PKR; this interaction inhibits EIF2AK2 and probably allows the virus to evade the innate immune response. Interacts with host CD209/DC-SIGN and CLEC4M/DC-SIGNR. Interact with host SPCS1; this interaction is essential for viral particle assembly. Interacts with protease NS2. The heterodimer E1/E2 interacts with host CLDN1; this interaction plays a role in viral entry into host cell. Part of the viral assembly initiation complex composed of NS2, E1, E2, NS3, NS4A, NS5A and the mature core protein. Interacts with host SLC3A2/4F2hc; the interaction may facilitate viral entry into host cell. Interacts with human PLSCR1. In terms of assembly, homohexamer. Homoheptamer. Interacts with protease NS2. As to quaternary structure, homodimer. Interacts with host SPCS1; this interaction is essential for viral particle assembly. Interacts with envelope glycoprotein E1. Interacts with envelope glycoprotein E2. Interacts with viroporin p7. Interacts with serine protease/helicase NS3. Part of the replication complex composed of NS2, NS3, NS4A, NS4B, NS5A and the RNA-directed RNA polymerase embedded in an ER-derived membranous web. Part of the viral assembly initiation complex composed of NS2, E1, E2, NS3, NS4A, NS5A and the mature core protein. Interacts with protease NS2. Interacts with non-structural protein 4A; this interaction stabilizes the folding of NS3 serine protease. NS3-NS4A interaction is essential for NS3 activation and allows membrane anchorage of the latter. NS3/NS4A complex also prevents phosphorylation of host IRF3, thus preventing the establishment of dsRNA induced antiviral state. Interacts with host MAVS; this interaction leads to the cleavage and inhibition of host MAVS. Interacts with host TICAM1; this interaction leads to the cleavage and inhibition of host TICAM1. Interacts with host TANK-binding kinase/TBK1; this interaction results in the inhibition of the association between TBK1 and IRF3, which leads to the inhibition of IRF3 activation. Interacts with host RBM24. Part of the replication complex composed of NS2, NS3, NS4A, NS4B, NS5A and the RNA-directed RNA polymerase embedded in an ER-derived membranous web. Part of the viral assembly initiation complex composed of NS2, E1, E2, NS3, NS4A, NS5A and the mature core protein. In terms of assembly, interacts with NS3 serine protease; this interaction stabilizes the folding of NS3 serine protease. NS3-NS4A interaction is essential for NS3 activation and allows membrane anchorage of the latter. Interacts with non-structural protein 5A (via N-terminus). Part of the replication complex composed of NS2, NS3, NS4A, NS4B, NS5A and the RNA-directed RNA polymerase embedded in an ER-derived membranous web. Part of the viral assembly initiation complex composed of NS2, E1, E2, NS3, NS4A, NS5A and the mature core protein. As to quaternary structure, homomultimer. Interacts with non-structural protein NS5A. Interacts with host PLA2G4C; this interaction likely initiates the recruitment of replication complexes to lipid droplets. Interacts with host STING; this interaction disrupts the interaction between STING and TBK1 thereby suppressing the interferon signaling. Part of the replication complex composed of NS2, NS3, NS4A, NS4B, NS5A and the RNA-directed RNA polymerase embedded in an ER-derived membranous web. Monomer. Homodimer; dimerization is required for RNA-binding. Interacts with the mature core protein. Interacts (via N-terminus) with non-structural protein 4A. Interacts with non-structural protein 4B. Interacts (via region D2) with RNA-directed RNA polymerase. Part of the viral assembly initiation complex composed of NS2, E1, E2, NS3, NS4A, NS5A and the mature core protein. Part of the replication complex composed of NS2, NS3, NS4A, NS4B, NS5A and the RNA-directed RNA polymerase embedded in an ER-derived membranous web. Interacts with host GRB2. Interacts with host BIN1. Interacts with host PIK3R1. Interacts with host SRCAP. Interacts with host FKBP8. Interacts (via C-terminus) with host VAPB (via MSP domain). Interacts with host EIF2AK2/PKR; this interaction leads to disruption of EIF2AK2 dimerization by NS5A and probably allows the virus to evade the innate immune response. Interacts (via N-terminus) with host PACSIN2 (via N-terminus); this interaction attenuates protein kinase C alpha-mediated phosphorylation of PACSIN2 by disrupting the interaction between PACSIN2 and PRKCA. Interacts (via N-terminus) with host SRC kinase (via SH2 domain). Interacts with most Src-family kinases. Interacts with host IFI27 and SKP2; promotes the ubiquitin-mediated proteasomal degradation of NS5A. Interacts with host GPS2. Interacts with host TNFRSF21; this interaction allows the modulation by the virus of JNK, p38 MAPK, STAT3, and Akt signaling pathways in a DR6-dependent manner. Interacts (via N-terminus) with host CIDEB (via N-terminus); this interaction seems to regulate the association of HCV particles with APOE. Interacts with host CHKA/Choline Kinase-alpha; CHKA bridges host PI4KA and NS5A and potentiates NS5A-stimulated PI4KA activity, which then facilitates the targeting of the ternary complex to the ER for viral replication. Interacts with host SPSB2 (via C-terminus); this interaction targets NS5A for ubiquitination and degradation. Interacts with host RAB18; this interaction may promote the association of NS5A and other replicase components with lipid droplets. Interacts (via region D2) with host PPIA/CYPA; the interaction stimulates RNA-binding ability of NS5A and is dependent on the peptidyl-prolyl cis-trans isomerase activity of PPIA/CYPA. Interacts with host TRIM14; this interaction induces the degradation of NS5A. In terms of assembly, homooligomer. Interacts with non-structural protein 5A. Interacts with host VAPB. Interacts with host PRK2/PKN2. Interacts with host HNRNPA1 and SEPT6; these interactions facilitate viral replication. Part of the replication complex composed of NS2, NS3, NS4A, NS4B, NS5A and the RNA-directed RNA polymerase. Zn(2+) is required as a cofactor. The cofactor is Mg(2+). In terms of processing, specific enzymatic cleavages in vivo yield mature proteins. The structural proteins, core, E1, E2 and p7 are produced by proteolytic processing by host signal peptidases. The core protein precursor is synthesized as a 23 kDa, which is retained in the ER membrane through the hydrophobic signal peptide. Cleavage by the signal peptidase releases the 21 kDa mature core protein. The cleavage of the core protein precursor occurs between aminoacids 176 and 188 but the exact cleavage site is not known. Some degraded forms of the core protein appear as well during the course of infection. The other proteins (p7, NS2, NS3, NS4A, NS4B, NS5A and NS5B) are cleaved by the viral proteases. Autoprocessing between NS2 and NS3 is mediated by the NS2 cysteine protease catalytic domain and regulated by the NS3 N-terminal domain. Phosphorylated by host PKC and PKA. Post-translationally, ubiquitinated; mediated by UBE3A and leading to core protein subsequent proteasomal degradation. In terms of processing, highly N-glycosylated. Palmitoylation is required for NS2/3 autoprocessing and E2 recruitment to membranes. Post-translationally, palmitoylated. This modification may play a role in its polymerization or in protein-protein interactions. In terms of processing, phosphorylated on serines in a basal form termed p56. p58 is a hyperphosphorylated form of p56. p56 and p58 coexist in the cell in roughly equivalent amounts. Hyperphosphorylation is dependent on the presence of NS4A. Host CSNK1A1/CKI-alpha or RPS6KB1 kinases may be responsible for NS5A phosphorylation. Tyrosine phosphorylation is essential for the interaction with host SRC. Post-translationally, the N-terminus is phosphorylated by host PRK2/PKN2.

The protein resides in the host endoplasmic reticulum membrane. The protein localises to the host mitochondrion membrane. It localises to the virion. Its subcellular location is the host cytoplasm. It is found in the host nucleus. The protein resides in the host lipid droplet. The protein localises to the virion membrane. It localises to the host mitochondrion. Its subcellular location is the host cell membrane. It is found in the host perinuclear region. It catalyses the reaction Hydrolysis of four peptide bonds in the viral precursor polyprotein, commonly with Asp or Glu in the P6 position, Cys or Thr in P1 and Ser or Ala in P1'.. The catalysed reaction is a ribonucleoside 5'-triphosphate + H2O = a ribonucleoside 5'-diphosphate + phosphate + H(+). It carries out the reaction ATP + H2O = ADP + phosphate + H(+). The enzyme catalyses RNA(n) + a ribonucleoside 5'-triphosphate = RNA(n+1) + diphosphate. With respect to regulation, inhibited by the antiviral drug hexamethylene amiloride. Inhibition by amantadine appears to be genotype-dependent. Also inhibited by long-alkyl-chain iminosugar derivatives. Activity is up-regulated by PRK2/PKN2-mediated phosphorylation. Its function is as follows. Packages viral RNA to form a viral nucleocapsid, and promotes virion budding. Participates in the viral particle production as a result of its interaction with the non-structural protein 5A. Binds RNA and may function as a RNA chaperone to induce the RNA structural rearrangements taking place during virus replication. Modulates viral translation initiation by interacting with viral IRES and 40S ribosomal subunit. Affects various cell signaling pathways, host immunity and lipid metabolism. Prevents the establishment of cellular antiviral state by blocking the interferon-alpha/beta (IFN-alpha/beta) and IFN-gamma signaling pathways and by blocking the formation of phosphorylated STAT1 and promoting ubiquitin-mediated proteasome-dependent degradation of STAT1. Activates STAT3 leading to cellular transformation. Regulates the activity of cellular genes, including c-myc and c-fos. May repress the promoter of p53, and sequester CREB3 and SP110 isoform 3/Sp110b in the cytoplasm. Represses cell cycle negative regulating factor CDKN1A, thereby interrupting an important check point of normal cell cycle regulation. Targets transcription factors involved in the regulation of inflammatory responses and in the immune response: suppresses TNF-induced NF-kappa-B activation, and activates AP-1. Binds to dendritic cells (DCs) via C1QR1, resulting in down-regulation of T-lymphocytes proliferation. Alters lipid metabolism by interacting with hepatocellular proteins involved in lipid accumulation and storage. Induces up-regulation of FAS promoter activity, and thereby contributes to the increased triglyceride accumulation in hepatocytes (steatosis). In terms of biological role, forms a heterodimer with envelope glycoprotein E2, which mediates virus attachment to the host cell, virion internalization through clathrin-dependent endocytosis and fusion with host membrane. Fusion with the host cell is most likely mediated by both E1 and E2, through conformational rearrangements of the heterodimer required for fusion rather than a classical class II fusion mechanism. E1/E2 heterodimer binds host apolipoproteins such as APOB and ApoE thereby forming a lipo-viro-particle (LVP). APOE associated to the LVP allows the initial virus attachment to cell surface receptors such as the heparan sulfate proteoglycans (HSPGs), syndecan-1 (SDC1), syndecan-1 (SDC2), the low-density lipoprotein receptor (LDLR) and scavenger receptor class B type I (SCARB1). The cholesterol transfer activity of SCARB1 allows E2 exposure and binding of E2 to SCARB1 and the tetraspanin CD81. E1/E2 heterodimer binding on CD81 activates the epithelial growth factor receptor (EGFR) signaling pathway. Diffusion of the complex E1-E2-EGFR-SCARB1-CD81 to the cell lateral membrane allows further interaction with Claudin 1 (CLDN1) and occludin (OCLN) to finally trigger HCV entry. Forms a heterodimer with envelope glycoprotein E1, which mediates virus attachment to the host cell, virion internalization through clathrin-dependent endocytosis and fusion with host membrane. Fusion with the host cell is most likely mediated by both E1 and E2, through conformational rearrangements of the heterodimer required for fusion rather than a classical class II fusion mechanism. The interaction between envelope glycoprotein E2 and host apolipoprotein E/APOE allows the proper assembly, maturation and infectivity of the viral particles. This interaction is probably promoted via the up-regulation of cellular autophagy by the virus. E1/E2 heterodimer binds host apolipoproteins such as APOB and APOE thereby forming a lipo-viro-particle (LVP). APOE associated to the LVP allows the initial virus attachment to cell surface receptors such as the heparan sulfate proteoglycans (HSPGs), syndecan-1 (SDC1), syndecan-1 (SDC2), the low-density lipoprotein receptor (LDLR) and scavenger receptor class B type I (SCARB1). The cholesterol transfer activity of SCARB1 allows E2 exposure and binding of E2 to SCARB1 and the tetraspanin CD81. E1/E2 heterodimer binding on CD81 activates the epithelial growth factor receptor (EGFR) signaling pathway. Diffusion of the complex E1-E2-EGFR-SCARB1-CD81 to the cell lateral membrane allows further interaction with Claudin 1 (CLDN1) and occludin (OCLN) to finally trigger HCV entry. Inhibits host EIF2AK2/PKR activation, preventing the establishment of an antiviral state. Viral ligand for CD209/DC-SIGN and CLEC4M/DC-SIGNR, which are respectively found on dendritic cells (DCs), and on liver sinusoidal endothelial cells and macrophage-like cells of lymph node sinuses. These interactions allow the capture of circulating HCV particles by these cells and subsequent facilitated transmission to permissive cells such as hepatocytes and lymphocyte subpopulations. The interaction between E2 and host amino acid transporter complex formed by SLC3A2 and SLC7A5/LAT1 may facilitate viral entry into host cell. Functionally, ion channel protein that acts as a viroporin and plays an essential role in the assembly, envelopment and secretion of viral particles. Regulates the host cell secretory pathway, which induces the intracellular retention of viral glycoproteins and favors assembly of viral particles. Creates a pore in acidic organelles and releases Ca(2+) and H(+) in the cytoplasm of infected cells, leading to a productive viral infection. High levels of cytoplasmic Ca(2+) may trigger membrane trafficking and transport of viral ER-associated proteins to viroplasms, sites of viral genome replication. This ionic imbalance induces the assembly of the inflammasome complex, which triggers the maturation of pro-IL-1beta into IL-1beta through the action of caspase-1. Targets also host mitochondria and induces mitochondrial depolarization. In addition of its role as a viroporin, acts as a lipid raft adhesion factor. Its function is as follows. Cysteine protease required for the proteolytic auto-cleavage between the non-structural proteins NS2 and NS3. The N-terminus of NS3 is required for the function of NS2 protease (active region NS2-3). Promotes the initiation of viral particle assembly by mediating the interaction between structural and non-structural proteins. In terms of biological role, displays three enzymatic activities: serine protease with a chymotrypsin-like fold, NTPase and RNA helicase. NS3 serine protease, in association with NS4A, is responsible for the cleavages of NS3-NS4A, NS4A-NS4B, NS4B-NS5A and NS5A-NS5B. The NS3/NS4A complex prevents phosphorylation of host IRF3, thus preventing the establishment of dsRNA induced antiviral state. The NS3/NS4A complex induces host amino acid transporter component SLC3A2, thus contributing to HCV propagation. NS3 RNA helicase binds to RNA and unwinds both dsDNA and dsRNA in the 3' to 5' direction, and likely resolves RNA complicated stable secondary structures in the template strand. Binds a single ATP and catalyzes the unzipping of a single base pair of dsRNA. Inhibits host antiviral proteins TBK1 and IRF3 thereby preventing the establishment of an antiviral state. Cleaves host MAVS/CARDIF thereby preventing the establishment of an antiviral state. Cleaves host TICAM1/TRIF, thereby disrupting TLR3 signaling and preventing the establishment of an antiviral state. Induces a specific membrane alteration that serves as a scaffold for the virus replication complex. This membrane alteration gives rise to the so-called ER-derived membranous web that contains the replication complex. NS4B self-interaction contributes to its function in membranous web formation. Promotes host TRIF protein degradation in a CASP8-dependent manner thereby inhibiting host TLR3-mediated interferon signaling. Disrupts the interaction between STING and TBK1 contributing to the inhibition of interferon signaling. Functionally, phosphorylated protein that is indispensable for viral replication and assembly. Both hypo- and hyperphosphorylated states are required for the viral life cycle. The hyperphosphorylated form of NS5A is an inhibitor of viral replication. Involved in RNA-binding and especially in binding to the viral genome. Zinc is essential for RNA-binding. Participates in the viral particle production as a result of its interaction with the mature viral core protein. Its interaction with host VAPB may target the viral replication complex to vesicles. Down-regulates viral IRES translation initiation. Mediates interferon resistance, presumably by interacting with and inhibiting host EIF2AK2/PKR. Prevents BIN1-induced apoptosis. Acts as a transcriptional activator of some host genes important for viral replication when localized in the nucleus. Via the interaction with host PACSIN2, modulates lipid droplet formation in order to promote virion assembly. Modulates TNFRSF21/DR6 signaling pathway for viral propagation. Its function is as follows. RNA-dependent RNA polymerase that performs primer-template recognition and RNA synthesis during viral replication. Initiates RNA transcription/replication at a flavin adenine dinucleotide (FAD), resulting in a 5'- FAD cap on viral RNAs. In this way, recognition of viral 5' RNA by host pattern recognition receptors can be bypassed, thereby evading activation of antiviral pathways. This chain is Genome polyprotein, found in Hepatitis C virus genotype 6a (isolate 6a33) (HCV).